The chain runs to 320 residues: 3'-5' exoribonuclease YhaM (320 aa).

Residues 18-90 (FLIKSATKAV…QLKIGSIRPT (73 aa)) constitute a DNA-binding region (OB). Residues 163–279 (HVVCMLNVAK…LHMIDNIDAK (117 aa)) enclose the HD domain.

This sequence belongs to the YhaM family.

In terms of biological role, shows a 3'-5' exoribonuclease activity. This Halalkalibacterium halodurans (strain ATCC BAA-125 / DSM 18197 / FERM 7344 / JCM 9153 / C-125) (Bacillus halodurans) protein is 3'-5' exoribonuclease YhaM.